The sequence spans 474 residues: tRNA-2-methylthio-N(6)-dimethylallyladenosine synthase (474 aa).

Residues 3–120 (KKLHIKTWGC…LPEMIDQIEA (118 aa)) enclose the MTTase N-terminal domain. [4Fe-4S] cluster is bound by residues C12, C49, C83, C157, C161, and C164. In terms of domain architecture, Radical SAM core spans 143 to 375 (RADGPSAFVS…QDRITQQAMR (233 aa)). A TRAM domain is found at 378-441 (RQMLGTVQRI…TNSLRGNFIR (64 aa)).

It belongs to the methylthiotransferase family. MiaB subfamily. As to quaternary structure, monomer. Requires [4Fe-4S] cluster as cofactor.

It localises to the cytoplasm. The catalysed reaction is N(6)-dimethylallyladenosine(37) in tRNA + (sulfur carrier)-SH + AH2 + 2 S-adenosyl-L-methionine = 2-methylsulfanyl-N(6)-dimethylallyladenosine(37) in tRNA + (sulfur carrier)-H + 5'-deoxyadenosine + L-methionine + A + S-adenosyl-L-homocysteine + 2 H(+). Catalyzes the methylthiolation of N6-(dimethylallyl)adenosine (i(6)A), leading to the formation of 2-methylthio-N6-(dimethylallyl)adenosine (ms(2)i(6)A) at position 37 in tRNAs that read codons beginning with uridine. The protein is tRNA-2-methylthio-N(6)-dimethylallyladenosine synthase of Shewanella woodyi (strain ATCC 51908 / MS32).